The sequence spans 374 residues: Fasciclin-like arabinogalactan protein CTB11 (374 aa).

A signal peptide spans 1 to 18; sequence MHFPALAVAGCLLSRATA. FAS1 domains lie at 19–171 and 173–302; these read QSLD…DANM and LPHN…DGAL. 5 N-linked (GlcNAc...) asparagine glycosylation sites follow: N52, N72, N120, N132, and N176. The helical transmembrane segment at 328–348 threads the bilayer; the sequence is ILASHQLTLLAVLAMALVSIL.

The protein belongs to the fasciclin-like AGP family.

The protein localises to the membrane. It participates in mycotoxin biosynthesis. Functionally, fasciclin-like arabinogalactan protein; part of the gene cluster that mediates the biosynthesis of cercosporin, a light-activated, non-host-selective toxin. The perylenequinone chromophore of cercosporin absorbs light energy to attain an electronically-activated triplet state and produces active oxygen species such as the hydroxyl radical, superoxide, hydrogen peroxide or singlet oxygen upon reaction with oxygen molecules. These reactive oxygen species cause damage to various cellular components including lipids, proteins and nucleic acids. The first step of cercosporin biosynthesis is performed by the polyketide synthase CTB1 which catalyzes the formation of nor-toralactone. The starter unit acyltransferase (SAT) domain of CTB1 initiates polyketide extension by the selective utilization of acetyl-CoA, which is elongated to the heptaketide in the beta-ketoacyl synthase (KS) domain by successive condensations with six malonyl units introduced by the malonyl acyltransferase (MAT) domain. The product template (PT) domain catalyzes C4-C9 and C2-C11 aldol cyclizations and dehydrations to a trihydroxynaphthalene, which is thought to be delivered to the thioesterase (TE) domain for product release. The bifunctional enzyme CTB3 then methylates nor-toralactone to toralactone before conducting an unusual oxidative aromatic ring opening. The O-methyltransferase CTB2 further methylates the nascent OH-6 of the CBT3 product, blocking further oxidation at this site before the reductase CTB6 reduces the 2-oxopropyl ketone at position C7, giving naphthalene. The FAD-dependent monooxygenase CTB5 in concert with the multicopper oxidase CTB12 are responsible for homodimerization of naphthalene with CTB7 installing the dioxepine moiety, finally producing cercosporin. The fasciclin domain-containing protein CTB11 might act with CTB5 and CTB12 whereas the roles of CTB9 and CTB10 have still to be elucidated. This is Fasciclin-like arabinogalactan protein CTB11 from Cercospora beticola (Sugarbeet leaf spot fungus).